The primary structure comprises 332 residues: F-box/SPRY domain-containing protein 1 (332 aa).

Residues 1-10 show a composition bias toward acidic residues; it reads MTENNEETIV. Positions 1–81 are disordered; sequence MTENNEETIV…RRSPRRPEVS (81 aa). Residues 15–24 show a composition bias toward polar residues; the sequence is CNLTSSTPMK. The 49-residue stretch at 79-127 folds into the F-box domain; that stretch reads EVSASRLPLKVLNQIFQYLSLKDLRSAMLTCHSWNNALSMEDSDIWQQL. The B30.2/SPRY domain maps to 138-330; that stretch reads SDPFLFVELR…VTMVYVGSPQ (193 aa).

This sequence belongs to the FBXO45/Fsn family. Component of an SCF (SKP1-CUL1-F-box protein) E3 ubiquitin ligase complex composed of cul-1, fsn-1, rpm-1 and skr-1. Interacts (via SPRY domain) with scd-2 (via cytoplasmic domain). Interacts (via SPRY domain) with convertase egl-3 (via C-terminus).

The protein resides in the synapse. It participates in protein modification; protein ubiquitination. Component of a SCF (SKP1-CUL1-F-box protein) E3 ubiquitin ligase complex which is required for the restriction and/or maturation of synapses in GABAergic neuromuscular junction (NMJ) presynaptic neurons. Promotes NRJ synapse development and synaptic transmission by negatively regulating the daf-2/InsR pathway in muscles. By targeting convertase egl-3 for degradation, negatively modulates insulin-like protein ins-4 and ins-6 processing. May stabilize synapse formation by promoting the down-regulation of scd-2. Regulates axon termination in PLM and ALM neurons. This is F-box/SPRY domain-containing protein 1 (fsn-1) from Caenorhabditis briggsae.